A 515-amino-acid polypeptide reads, in one-letter code: Bifunctional purine biosynthesis protein PurH (515 aa).

The 145-residue stretch at 1–145 folds into the MGS-like domain; that stretch reads MTKRALISVS…KNHASVTVVV (145 aa).

Belongs to the PurH family.

The catalysed reaction is (6R)-10-formyltetrahydrofolate + 5-amino-1-(5-phospho-beta-D-ribosyl)imidazole-4-carboxamide = 5-formamido-1-(5-phospho-D-ribosyl)imidazole-4-carboxamide + (6S)-5,6,7,8-tetrahydrofolate. It catalyses the reaction IMP + H2O = 5-formamido-1-(5-phospho-D-ribosyl)imidazole-4-carboxamide. It participates in purine metabolism; IMP biosynthesis via de novo pathway; 5-formamido-1-(5-phospho-D-ribosyl)imidazole-4-carboxamide from 5-amino-1-(5-phospho-D-ribosyl)imidazole-4-carboxamide (10-formyl THF route): step 1/1. It functions in the pathway purine metabolism; IMP biosynthesis via de novo pathway; IMP from 5-formamido-1-(5-phospho-D-ribosyl)imidazole-4-carboxamide: step 1/1. The protein is Bifunctional purine biosynthesis protein PurH of Streptococcus pyogenes serotype M3 (strain ATCC BAA-595 / MGAS315).